The chain runs to 419 residues: MENFTEENLHPWITTTTRVYNNVTIFPQYDDELGKFEIMVLCILCFMALFGNAVVLIVLRIKKTTLTRMQLLIVYLSVTDISVALFHILPTIILKINVYFLGDISACRVYQFITVAELYASSFVLIVTALDRYISICHPLAAHMWTNRRVHMTTALALFLALMCSLPQLDAVLVDFHGGKLCRPNLTTELANIAYSWWAFCSVFFVPLLLLIFFYGRICFVVWQSMRGRECTQSVGSSASRYVRKPIKCRISSQTSSENRVKNYSDARDKDSSRNPRAICRGVSKSKIKTIKLTFSVVACFIICYTPFFTVLMARTYDAELSSAQTPALVILSLLPSLNSCTNPWIYLAFSGKVWCRQQSQNFPRTWTQTTNTYLVELEAKKRTSFGAEHVTFASNSTARKTLNVDDTNTTALMSSSPC.

Over 1–37 (MENFTEENLHPWITTTTRVYNNVTIFPQYDDELGKFE) the chain is Extracellular. Residues Asn-3 and Asn-22 are each glycosylated (N-linked (GlcNAc...) asparagine). Residues 38-58 (IMVLCILCFMALFGNAVVLIV) form a helical membrane-spanning segment. The Cytoplasmic segment spans residues 59–80 (LRIKKTTLTRMQLLIVYLSVTD). Residues 81–101 (ISVALFHILPTIILKINVYFL) traverse the membrane as a helical segment. Residues 102-108 (GDISACR) lie on the Extracellular side of the membrane. An intrachain disulfide couples Cys-107 to Cys-182. The helical transmembrane segment at 109 to 129 (VYQFITVAELYASSFVLIVTA) threads the bilayer. The Cytoplasmic portion of the chain corresponds to 130-153 (LDRYISICHPLAAHMWTNRRVHMT). A helical membrane pass occupies residues 154-174 (TALALFLALMCSLPQLDAVLV). Residues 175 to 192 (DFHGGKLCRPNLTTELAN) are Extracellular-facing. N-linked (GlcNAc...) asparagine glycosylation is present at Asn-185. Residues 193 to 213 (IAYSWWAFCSVFFVPLLLLIF) traverse the membrane as a helical segment. The Cytoplasmic portion of the chain corresponds to 214–292 (FYGRICFVVW…VSKSKIKTIK (79 aa)). The interval 253-274 (SQTSSENRVKNYSDARDKDSSR) is disordered. The span at 259 to 274 (NRVKNYSDARDKDSSR) shows a compositional bias: basic and acidic residues. Residues 293 to 313 (LTFSVVACFIICYTPFFTVLM) traverse the membrane as a helical segment. At 314–329 (ARTYDAELSSAQTPAL) the chain is on the extracellular side. Residues 330–350 (VILSLLPSLNSCTNPWIYLAF) form a helical membrane-spanning segment. Over 351–419 (SGKVWCRQQS…TTALMSSSPC (69 aa)) the chain is Cytoplasmic.

It belongs to the G-protein coupled receptor 1 family. Vasopressin/oxytocin receptor subfamily. As to expression, present in the nervous system and peripheral tissues.

The protein localises to the cell membrane. Acts as a receptor for octopressin. The protein is Octopressin receptor of Octopus vulgaris (Common octopus).